The primary structure comprises 264 residues: S-adenosylmethionine decarboxylase proenzyme (264 aa).

Ser-112 serves as the catalytic Schiff-base intermediate with substrate; via pyruvic acid. Ser-112 is subject to Pyruvic acid (Ser); by autocatalysis. The active-site Proton acceptor; for processing activity is the His-117. Cys-140 functions as the Proton donor; for catalytic activity in the catalytic mechanism.

It belongs to the prokaryotic AdoMetDC family. Type 2 subfamily. Heterooctamer of four alpha and four beta chains arranged as a tetramer of alpha/beta heterodimers. The cofactor is pyruvate. Is synthesized initially as an inactive proenzyme. Formation of the active enzyme involves a self-maturation process in which the active site pyruvoyl group is generated from an internal serine residue via an autocatalytic post-translational modification. Two non-identical subunits are generated from the proenzyme in this reaction, and the pyruvate is formed at the N-terminus of the alpha chain, which is derived from the carboxyl end of the proenzyme. The post-translation cleavage follows an unusual pathway, termed non-hydrolytic serinolysis, in which the side chain hydroxyl group of the serine supplies its oxygen atom to form the C-terminus of the beta chain, while the remainder of the serine residue undergoes an oxidative deamination to produce ammonia and the pyruvoyl group blocking the N-terminus of the alpha chain.

It carries out the reaction S-adenosyl-L-methionine + H(+) = S-adenosyl 3-(methylsulfanyl)propylamine + CO2. It functions in the pathway amine and polyamine biosynthesis; S-adenosylmethioninamine biosynthesis; S-adenosylmethioninamine from S-adenosyl-L-methionine: step 1/1. Its function is as follows. Catalyzes the decarboxylation of S-adenosylmethionine to S-adenosylmethioninamine (dcAdoMet), the propylamine donor required for the synthesis of the polyamines spermine and spermidine from the diamine putrescine. This chain is S-adenosylmethionine decarboxylase proenzyme, found in Cronobacter sakazakii (strain ATCC BAA-894) (Enterobacter sakazakii).